Reading from the N-terminus, the 95-residue chain is Orphan antitoxin ParD2 (95 aa).

Antitoxin component of a non-functional type II toxin-antitoxin (TA system). Does not neutralize the effect of any of the RelE or ParE toxins. The chain is Orphan antitoxin ParD2 (parD2) from Caulobacter vibrioides (strain ATCC 19089 / CIP 103742 / CB 15) (Caulobacter crescentus).